We begin with the raw amino-acid sequence, 91 residues long: Bombyxin C-1 (91 aa).

The N-terminal stretch at 1–19 (MKLVMLLVVVSAMLVLGGA) is a signal peptide. At glutamine 20 the chain carries Pyrrolidone carboxylic acid. 3 disulfides stabilise this stretch: cysteine 27/cysteine 76, cysteine 39/cysteine 89, and cysteine 75/cysteine 80. The propeptide at 47 to 67 (SGSQYAGYGWPWLPPFSSSRG) is c peptide like.

It belongs to the insulin family. As to quaternary structure, heterodimer of a B chain and an A chain linked by two disulfide bonds.

The protein resides in the secreted. Brain peptide responsible for activation of prothoracic glands to produce ecdysone in insects. In Bombyx mori (Silk moth), this protein is Bombyxin C-1 (BBXC1).